Here is a 438-residue protein sequence, read N- to C-terminus: Glutamate-1-semialdehyde 2,1-aminomutase (438 aa).

K278 bears the N6-(pyridoxal phosphate)lysine mark.

It belongs to the class-III pyridoxal-phosphate-dependent aminotransferase family. HemL subfamily. In terms of assembly, homodimer. Pyridoxal 5'-phosphate serves as cofactor.

The protein localises to the cytoplasm. It catalyses the reaction (S)-4-amino-5-oxopentanoate = 5-aminolevulinate. Its pathway is porphyrin-containing compound metabolism; protoporphyrin-IX biosynthesis; 5-aminolevulinate from L-glutamyl-tRNA(Glu): step 2/2. The sequence is that of Glutamate-1-semialdehyde 2,1-aminomutase from Delftia acidovorans (strain DSM 14801 / SPH-1).